A 1039-amino-acid polypeptide reads, in one-letter code: Isoleucine--tRNA ligase (1039 aa).

The 'HIGH' region motif lies at 46–56; sequence PYCSGAIHLGT. The short motif at 600–604 is the 'KMSKS' region element; the sequence is KMSKS. Residue lysine 603 coordinates ATP.

Belongs to the class-I aminoacyl-tRNA synthetase family. IleS type 2 subfamily. In terms of assembly, monomer. Requires Zn(2+) as cofactor.

Its subcellular location is the cytoplasm. The catalysed reaction is tRNA(Ile) + L-isoleucine + ATP = L-isoleucyl-tRNA(Ile) + AMP + diphosphate. Its function is as follows. Catalyzes the attachment of isoleucine to tRNA(Ile). As IleRS can inadvertently accommodate and process structurally similar amino acids such as valine, to avoid such errors it has two additional distinct tRNA(Ile)-dependent editing activities. One activity is designated as 'pretransfer' editing and involves the hydrolysis of activated Val-AMP. The other activity is designated 'posttransfer' editing and involves deacylation of mischarged Val-tRNA(Ile). This Methanocaldococcus jannaschii (strain ATCC 43067 / DSM 2661 / JAL-1 / JCM 10045 / NBRC 100440) (Methanococcus jannaschii) protein is Isoleucine--tRNA ligase.